The chain runs to 243 residues: Proteasome subunit beta (243 aa).

Positions 1–46 (MFNPNNGSEFARNRARLDDTPNPYEPEVGSLPEGDRSQAGSDTVNK) are disordered. Positions 1–48 (MFNPNNGSEFARNRARLDDTPNPYEPEVGSLPEGDRSQAGSDTVNKTG) are cleaved as a propeptide — removed in mature form; by autocatalysis. The active-site Nucleophile is T49.

This sequence belongs to the peptidase T1B family. As to quaternary structure, the 20S proteasome core is composed of 14 alpha and 14 beta subunits that assemble into four stacked heptameric rings, resulting in a barrel-shaped structure. The two inner rings, each composed of seven catalytic beta subunits, are sandwiched by two outer rings, each composed of seven alpha subunits. The catalytic chamber with the active sites is on the inside of the barrel. Has a gated structure, the ends of the cylinder being occluded by the N-termini of the alpha-subunits. Is capped at one or both ends by the proteasome regulatory ATPase, PAN.

The protein resides in the cytoplasm. It catalyses the reaction Cleavage of peptide bonds with very broad specificity.. The formation of the proteasomal ATPase PAN-20S proteasome complex, via the docking of the C-termini of PAN into the intersubunit pockets in the alpha-rings, triggers opening of the gate for substrate entry. Interconversion between the open-gate and close-gate conformations leads to a dynamic regulation of the 20S proteasome proteolysis activity. Functionally, component of the proteasome core, a large protease complex with broad specificity involved in protein degradation. This is Proteasome subunit beta from Halobacterium salinarum (strain ATCC 29341 / DSM 671 / R1).